A 526-amino-acid chain; its full sequence is Alpha-1,3-mannosyl-glycoprotein 4-beta-N-acetylglucosaminyltransferase A (526 aa).

At 1–6 (MRLRNG) the chain is on the cytoplasmic side. Residues 7–27 (TVATALVFVTSFLTLSWYTTW) traverse the membrane as a helical; Signal-anchor for type II membrane protein segment. A coiled-coil region spans residues 28–63 (QNGKEKLIAYQREFLALKERLRVAEHRISQRSSELN). At 28–526 (QNGKEKLIAY…NEIHIKKVTS (499 aa)) the chain is on the lumenal side. N449 carries N-linked (GlcNAc...) asparagine glycosylation. S465 is modified (phosphoserine).

This sequence belongs to the glycosyltransferase 54 family. A divalent metal cation serves as cofactor. In terms of processing, N-glycosylated.

It localises to the golgi apparatus membrane. It is found in the secreted. The catalysed reaction is N(4)-{beta-D-GlcNAc-(1-&gt;2)-alpha-D-Man-(1-&gt;3)-[beta-D-GlcNAc-(1-&gt;2)-alpha-D-Man-(1-&gt;6)]-beta-D-Man-(1-&gt;4)-beta-D-GlcNAc-(1-&gt;4)-beta-D-GlcNAc}-L-asparaginyl-[protein] + UDP-N-acetyl-alpha-D-glucosamine = N(4)-{beta-D-GlcNAc-(1-&gt;2)-[beta-D-GlcNAc-(1-&gt;4)]-alpha-D-Man-(1-&gt;3)-[beta-D-GlcNAc-(1-&gt;2)-alpha-D-Man-(1-&gt;6)]-beta-D-Man-(1-&gt;4)-beta-D-GlcNAc-(1-&gt;4)-beta-D-GlcNAc}-L-asparaginyl-[protein] + UDP + H(+). It catalyses the reaction an N(4)-{beta-D-GlcNAc-(1-&gt;2)-alpha-D-Man-(1-&gt;3)-[alpha-D-Man-(1-&gt;6)]-beta-D-Man-(1-&gt;4)-beta-D-GlcNAc-(1-&gt;4)-beta-D-GlcNAc}-L-asparaginyl-[protein] + UDP-N-acetyl-alpha-D-glucosamine = an N(4)-{beta-D-GlcNAc-(1-&gt;2)-[beta-D-GlcNAc-(1-&gt;4)]-alpha-D-Man-(1-&gt;3)-[alpha-D-Man-(1-&gt;6)]-beta-D-Man-(1-&gt;4)-beta-D-GlcNAc-(1-&gt;4)-beta-D-GlcNAc}-L-asparaginyl-[protein] + UDP + H(+). The enzyme catalyses an N(4)-{beta-D-GlcNAc-(1-&gt;2)-alpha-D-Man-(1-&gt;3)-[beta-D-GlcNAc-(1-&gt;2)-[beta-D-GlcNAc-(1-&gt;6)]-alpha-D-Man-(1-&gt;6)]-beta-D-Man-(1-&gt;4)-beta-D-GlcNAc-(1-&gt;4)-beta-D-GlcNAc}-L-asparaginyl-[protein] + UDP-N-acetyl-alpha-D-glucosamine = an N(4)-{beta-D-GlcNAc-(1-&gt;2)-[beta-D-GlcNAc-(1-&gt;4)]-alpha-D-Man-(1-&gt;3)-[beta-D-GlcNAc-(1-&gt;2)-[beta-D-GlcNAc-(1-&gt;6)]-alpha-D-Man-(1-&gt;6)]-beta-D-Man-(1-&gt;4)-beta-D-GlcNAc-(1-&gt;4)-beta-D-GlcNAc}-L-asparaginyl-[protein] + UDP + H(+). It carries out the reaction an N(4)-{beta-D-GlcNAc-(1-&gt;2)-alpha-D-Man-(1-&gt;3)-[beta-D-GlcNAc-(1-&gt;2)-alpha-D-Man-(1-&gt;6)]-beta-D-Man-(1-&gt;4)-beta-D-GlcNAc-(1-&gt;4)-[alpha-L-Fuc-(1-&gt;6)]-beta-D-GlcNAc}-L-asparaginyl-[protein] + UDP-N-acetyl-alpha-D-glucosamine = N(4)-{beta-D-GlcNAc-(1-&gt;2)-[beta-D-GlcNAc-(1-&gt;4)]-alpha-D-Man-(1-&gt;3)-[beta-D-GlcNAc-(1-&gt;2)-alpha-D-Man-(1-&gt;6)]-beta-D-Man-(1-&gt;4)-beta-D-GlcNAc-(1-&gt;4)-[alpha-L-Fuc-(1-&gt;6)]-beta-D-GlcNAc}-asparaginyl-[protein] + UDP + H(+). The catalysed reaction is an N(4)-{beta-D-GlcNAc-(1-&gt;2)-alpha-D-Man-(1-&gt;3)-[beta-D-Gal-(1-&gt;4)-beta-D-GlcNAc-(1-&gt;2)-alpha-D-Man-(1-&gt;6)]-beta-D-Man-(1-&gt;4)-beta-D-GlcNAc-(1-&gt;4)-beta-D-GlcNAc}-L-asparaginyl-[protein] + UDP-N-acetyl-alpha-D-glucosamine = an N(4)-{beta-D-GlcNAc-(1-&gt;2)-[beta-D-GlcNAc-(1-&gt;4)]-alpha-D-Man-(1-&gt;3)-[beta-D-Gal-(1-&gt;4)-beta-D-GlcNAc-(1-&gt;2)-alpha-D-Man-(1-&gt;6)]-beta-D-Man-(1-&gt;4)-beta-D-GlcNAc-(1-&gt;4)-beta-D-GlcNAc}-L-asparaginyl-[protein] + UDP + H(+). It catalyses the reaction N(4)-{beta-D-GlcNAc-(1-&gt;2)-alpha-D-Man-(1-&gt;3)-[alpha-D-Man-(1-&gt;3)-{alpha-D-Man-(1-&gt;6)}-alpha-D-Man-(1-&gt;6)]-beta-D-Man-(1-&gt;4)-beta-D-GlcNAc-(1-&gt;4)-beta-D-GlcNAc}-asparaginyl-[protein] + UDP-N-acetyl-alpha-D-glucosamine = N(4)-{beta-D-GlcNAc-(1-&gt;2)-[beta-D-GlcNAc-(1-&gt;4)]-alpha-D-Man-(1-&gt;3)-[alpha-D-Man-(1-&gt;3)-{alpha-D-Man-(1-&gt;6)}-alpha-D-Man-(1-&gt;6)]-beta-D-Man-(1-&gt;4)-beta-D-GlcNAc-(1-&gt;4)-beta-D-GlcNAc}-asparaginyl-[protein] + UDP + H(+). The enzyme catalyses N(4)-{beta-D-GlcNAc-(1-&gt;2)-alpha-D-Man-(1-&gt;3)-beta-D-Man-(1-&gt;4)-beta-D-GlcNAc-(1-&gt;4)-beta-D-GlcNAc}-asparaginyl-[protein] + UDP-N-acetyl-alpha-D-glucosamine = N(4)-{beta-D-GlcNAc-(1-&gt;2)-[beta-D-GlcNAc-(1-&gt;4)]-alpha-D-Man-(1-&gt;3)-beta-D-Man-(1-&gt;4)-beta-D-GlcNAc-(1-&gt;4)-beta-D-GlcNAc}-asparaginyl-[protein] + UDP + H(+). It participates in protein modification; protein glycosylation. Its activity is regulated as follows. Inhibited by UDP. Glycosyltransferase that catalyze the transfer of GlcNAc from UDP-GlcNAc to the GlcNAcbeta1-2Manalpha1-3 arm of the core structure of N-linked glycans through a beta1-4 linkage and participates in the production of tri- and tetra-antennary N-linked sugar chains. Involved in glucose transport by mediating SLC2A2/GLUT2 glycosylation, thereby controlling cell-surface expression of SLC2A2 in pancreatic beta cells. The polypeptide is Alpha-1,3-mannosyl-glycoprotein 4-beta-N-acetylglucosaminyltransferase A (Rattus norvegicus (Rat)).